The primary structure comprises 86 residues: UPF0297 protein LCABL_08470 (86 aa).

Belongs to the UPF0297 family.

The polypeptide is UPF0297 protein LCABL_08470 (Lacticaseibacillus casei (strain BL23) (Lactobacillus casei)).